We begin with the raw amino-acid sequence, 157 residues long: Protein EOLA1 (157 aa).

The ASCH domain maps to 6-92; that stretch reads LSFRQPYAGL…IAGLIDIGET (87 aa).

The protein belongs to the EOLA family. Interacts with MT2A.

In terms of biological role, may play a role in cell protection during the inflammatory response. In epithelial cells, negatively regulates IL6 production and apoptosis through the regulation of MT2A expression. The chain is Protein EOLA1 from Mus musculus (Mouse).